Consider the following 287-residue polypeptide: Ribosomal RNA small subunit methyltransferase A (287 aa).

Asn-28, Leu-30, Gly-55, Glu-76, Asp-101, and Asn-125 together coordinate S-adenosyl-L-methionine.

The protein belongs to the class I-like SAM-binding methyltransferase superfamily. rRNA adenine N(6)-methyltransferase family. RsmA subfamily.

The protein localises to the cytoplasm. It catalyses the reaction adenosine(1518)/adenosine(1519) in 16S rRNA + 4 S-adenosyl-L-methionine = N(6)-dimethyladenosine(1518)/N(6)-dimethyladenosine(1519) in 16S rRNA + 4 S-adenosyl-L-homocysteine + 4 H(+). Its function is as follows. Specifically dimethylates two adjacent adenosines (A1518 and A1519) in the loop of a conserved hairpin near the 3'-end of 16S rRNA in the 30S particle. May play a critical role in biogenesis of 30S subunits. The sequence is that of Ribosomal RNA small subunit methyltransferase A from Alkaliphilus oremlandii (strain OhILAs) (Clostridium oremlandii (strain OhILAs)).